We begin with the raw amino-acid sequence, 368 residues long: Homoserine O-acetyltransferase (368 aa).

The AB hydrolase-1 domain occupies 44–350; sequence NAILVAHAWT…AYGHDAFLLE (307 aa). Ser150 acts as the Nucleophile in catalysis. Arg217 contributes to the substrate binding site. Catalysis depends on residues Asp311 and His344. Asp345 is a substrate binding site.

Belongs to the AB hydrolase superfamily. MetX family. Homodimer.

It localises to the cytoplasm. The enzyme catalyses L-homoserine + acetyl-CoA = O-acetyl-L-homoserine + CoA. Its pathway is amino-acid biosynthesis; L-methionine biosynthesis via de novo pathway; O-acetyl-L-homoserine from L-homoserine: step 1/1. Functionally, transfers an acetyl group from acetyl-CoA to L-homoserine, forming acetyl-L-homoserine. The polypeptide is Homoserine O-acetyltransferase (Geobacter sulfurreducens (strain ATCC 51573 / DSM 12127 / PCA)).